We begin with the raw amino-acid sequence, 207 residues long: 8-oxoguanine DNA glycosylase/AP lyase (207 aa).

Residues K129 and D147 contribute to the active site.

The protein belongs to the type-2 OGG1 family.

The enzyme catalyses 2'-deoxyribonucleotide-(2'-deoxyribose 5'-phosphate)-2'-deoxyribonucleotide-DNA = a 3'-end 2'-deoxyribonucleotide-(2,3-dehydro-2,3-deoxyribose 5'-phosphate)-DNA + a 5'-end 5'-phospho-2'-deoxyribonucleoside-DNA + H(+). Catalyzes the excision of an oxidatively damaged form of guanine (7,8-dihydro-8-oxoguanine = 8-oxoG) from DNA. Also cleaves the DNA backbone at apurinic/apyrimidinic sites (AP sites). The chain is 8-oxoguanine DNA glycosylase/AP lyase from Thermotoga maritima (strain ATCC 43589 / DSM 3109 / JCM 10099 / NBRC 100826 / MSB8).